The primary structure comprises 381 residues: Fatty acid elongase 6 (381 aa).

A run of 7 helical transmembrane segments spans residues 10-30 (IAAA…LVYS), 69-89 (LPYL…SLIV), 107-127 (GLVH…GLMI), 153-173 (LIWL…IMLL), 182-202 (FLHV…LLVA), 216-236 (GVHV…SGIV), and 280-300 (LLQI…NFLV). Positions 184–188 (HVYHH) match the HxxHH motif motif. The Nucleophile role is filled by histidine 187. Residues 362-381 (RKNGNGNGQKASLQAMAGSR) are disordered.

The protein belongs to the ELO family.

It is found in the membrane. It participates in lipid metabolism; polyunsaturated fatty acid biosynthesis. Involved in the synthesis of fatty acids. Elongates C18 polyunsaturated fatty acids (PUFAs) with a preference for Delta6 PUFAs. In Leishmania major, this protein is Fatty acid elongase 6.